The sequence spans 179 residues: UPF0200 protein TV0279 (179 aa).

Position 6-13 (6-13 (GMPGAGKD)) interacts with ATP.

It belongs to the UPF0200 family.

The polypeptide is UPF0200 protein TV0279 (Thermoplasma volcanium (strain ATCC 51530 / DSM 4299 / JCM 9571 / NBRC 15438 / GSS1)).